A 339-amino-acid polypeptide reads, in one-letter code: Annexin A2 (339 aa).

S2 carries the N-acetylserine modification. The tract at residues 2–24 (STVHEILSKLSLEGDHSLPPSAY) is S100A10-binding site. Position 24 is a phosphotyrosine; by SRC (Y24). Position 26 is a phosphothreonine; by PKC (T26). 4 Annexin repeats span residues 33–104 (FDAD…GLLK), 105–176 (TPSQ…ALAK), 189–261 (ELID…NLVQ), and 265–336 (NKQL…NLCG).

The protein belongs to the annexin family. In terms of assembly, heterotetramer containing 2 light chains of S100A10/p11 and 2 heavy chains of ANXA2/p36.

The protein resides in the secreted. Its subcellular location is the extracellular space. It is found in the extracellular matrix. It localises to the basement membrane. In terms of biological role, calcium-regulated membrane-binding protein whose affinity for calcium is greatly enhanced by anionic phospholipids. It binds two calcium ions with high affinity. In Gallus gallus (Chicken), this protein is Annexin A2 (ANXA2).